Here is a 1984-residue protein sequence, read N- to C-terminus: Vitellogenin receptor Yl (1984 aa).

Positions 1 to 19 (MCQAEHQVHPSEQRIRVES) are enriched in basic and acidic residues. The disordered stretch occupies residues 1-48 (MCQAEHQVHPSEQRIRVESPKMTASRRGFNLTSQTRAHPSSGGSTSSR). Asn30 is a glycosylation site (N-linked (GlcNAc...) asparagine). Residues 30 to 48 (NLTSQTRAHPSSGGSTSSR) are compositionally biased toward polar residues. 5 LDL-receptor class A domains span residues 89 to 125 (RCDA…LDCD), 128 to 167 (LCRP…LNCP), 183 to 221 (SCSK…AGCK), 226 to 263 (TCPG…RGCL), and 265 to 305 (LCEP…DLCH). Cystine bridges form between Cys90–Cys102, Cys97–Cys115, Cys109–Cys124, Cys129–Cys144, Cys137–Cys157, Cys151–Cys166, Cys184–Cys197, Cys191–Cys210, Cys204–Cys220, Cys227–Cys239, Cys234–Cys253, Cys247–Cys262, Cys266–Cys281, Cys275–Cys294, Cys288–Cys304, Cys310–Cys321, Cys315–Cys331, Cys352–Cys363, Cys359–Cys372, and Cys374–Cys387. Residues 306-343 (SKPDCDAKKCALGAKCHMMPASGAECFCPKGFRLAKFE) form the EGF-like 1 domain. In terms of domain architecture, EGF-like 2; calcium-binding spans 348–388 (DVDECKEQDDLCSQGCENTSGGYRCVCDAGYLLDKDNRTCR). 3 N-linked (GlcNAc...) asparagine glycosylation sites follow: Asn365, Asn384, and Asn429. LDL-receptor class B repeat units follow at residues 441-485 (SHIY…DWLT), 486-528 (QNIY…WPQK), 529-572 (GLMF…DMHQ), and 573-615 (QRIY…FEDQ). N-linked (GlcNAc...) asparagine glycosylation is found at Asn666, Asn749, and Asn782. LDL-receptor class B repeat units lie at residues 750–792 (GSLI…DHLS), 793–836 (RNLY…MPAE), 884–925 (QTIF…VHHD), and 934–940 (PRIYWTH). An N-linked (GlcNAc...) asparagine glycan is attached at Asn1022. 5 consecutive LDL-receptor class A domains span residues 1024–1063 (TCVE…MNCD), 1073–1110 (LCSP…QHCE), 1117–1153 (KCHV…LLCE), 1157–1194 (RCEP…DKCV), and 1197–1233 (SCPP…LNCG). 15 cysteine pairs are disulfide-bonded: Cys1025-Cys1040, Cys1035-Cys1053, Cys1047-Cys1062, Cys1074-Cys1087, Cys1081-Cys1100, Cys1094-Cys1109, Cys1118-Cys1130, Cys1125-Cys1143, Cys1137-Cys1152, Cys1158-Cys1170, Cys1165-Cys1183, Cys1177-Cys1193, Cys1198-Cys1210, Cys1205-Cys1223, and Cys1217-Cys1232. A glycan (N-linked (GlcNAc...) asparagine) is linked at Asn1240. LDL-receptor class A domains lie at 1242-1280 (SCAE…ADCG) and 1282-1319 (VCSI…LSCE). Disulfide bonds link Cys1243–Cys1257, Cys1250–Cys1270, Cys1264–Cys1279, Cys1283–Cys1296, Cys1290–Cys1309, and Cys1303–Cys1318. A glycan (N-linked (GlcNAc...) asparagine) is linked at Asn1265. N-linked (GlcNAc...) asparagine glycosylation occurs at Asn1326. Residues 1339-1376 (SCRPHLFDCQDGECVDLSRVCNNFPDCTNGHDEGPKCA) enclose the LDL-receptor class A 13 domain. Disulfide bonds link Cys1340–Cys1352, Cys1347–Cys1365, Cys1359–Cys1375, Cys1422–Cys1432, and Cys1428–Cys1441. In terms of domain architecture, EGF-like 3; calcium-binding spans 1418–1453 (DIDECQEQQPCAQLCENTLGGYQCQCHADFMLRQDR). N-linked (GlcNAc...) asparagine glycans are attached at residues Asn1475 and Asn1490. 2 LDL-receptor class B repeats span residues 1588–1637 (ARIF…DPHQ) and 1638–1687 (QLLY…YENN). A helical membrane pass occupies residues 1800-1820 (WLMALFVLAAGSLIAGLGYMY). Residues 1821–1984 (YQYRQRGHTD…GNDANARFVS (164 aa)) lie on the Cytoplasmic side of the membrane. Ser1926 bears the Phosphoserine mark. Disordered regions lie at residues 1927-1951 (KLHA…RQVP) and 1965-1984 (SAGQ…RFVS). The segment covering 1932–1946 (DGGGAGGDGDGGRGV) has biased composition (gly residues).

Belongs to the LDLR family. As to quaternary structure, interacts with osk (isoform A). In terms of tissue distribution, ovary.

Its subcellular location is the cell membrane. It localises to the cytoplasm. It is found in the cell cortex. The protein localises to the cytoplasmic vesicle. The protein resides in the clathrin-coated vesicle membrane. Its subcellular location is the early endosome membrane. It localises to the endosome. It is found in the multivesicular body lumen. In terms of biological role, cell surface receptor involved in uptake of vitellogenins (yolk proteins) into developing oocytes by receptor-mediated endocytosis. May also mediate uptake of apolpp/apolipophorins and their incorporation into yolk granules. Along with its ligands, required for maintenance of microtubule plus-end orientation towards the posterior pole of oocytes. Involved in polarized localization of germ plasm components, such as osk mRNA and vas protein, to the oocyte posterior cortex. Receptor-mediated endocytosis of vitellogenin receptor ligands is critical for osk (isoform A) mediated actin reorganization and the anchoring of germ plasm components to the oocyte cortex. This Drosophila melanogaster (Fruit fly) protein is Vitellogenin receptor Yl.